Here is an 81-residue protein sequence, read N- to C-terminus: Photosystem I iron-sulfur center (81 aa).

2 4Fe-4S ferredoxin-type domains span residues 2–31 (AHSV…MIPW) and 39–68 (IASA…VRVY). [4Fe-4S] cluster is bound by residues Cys11, Cys14, Cys17, Cys21, Cys48, Cys51, Cys54, and Cys58.

The eukaryotic PSI reaction center is composed of at least 11 subunits. The cofactor is [4Fe-4S] cluster.

The protein localises to the plastid. It localises to the chloroplast thylakoid membrane. The enzyme catalyses reduced [plastocyanin] + hnu + oxidized [2Fe-2S]-[ferredoxin] = oxidized [plastocyanin] + reduced [2Fe-2S]-[ferredoxin]. Apoprotein for the two 4Fe-4S centers FA and FB of photosystem I (PSI); essential for photochemical activity. FB is the terminal electron acceptor of PSI, donating electrons to ferredoxin. The C-terminus interacts with PsaA/B/D and helps assemble the protein into the PSI complex. Required for binding of PsaD and PsaE to PSI. PSI is a plastocyanin-ferredoxin oxidoreductase, converting photonic excitation into a charge separation, which transfers an electron from the donor P700 chlorophyll pair to the spectroscopically characterized acceptors A0, A1, FX, FA and FB in turn. The protein is Photosystem I iron-sulfur center of Zygnema circumcarinatum (Green alga).